Consider the following 151-residue polypeptide: Putative pre-16S rRNA nuclease (151 aa).

Belongs to the YqgF nuclease family.

Its subcellular location is the cytoplasm. Functionally, could be a nuclease involved in processing of the 5'-end of pre-16S rRNA. The polypeptide is Putative pre-16S rRNA nuclease (Nitrosospira multiformis (strain ATCC 25196 / NCIMB 11849 / C 71)).